Reading from the N-terminus, the 730-residue chain is Trimethylamine dehydrogenase (730 aa).

The FMN site is built by Pro29, Cys31, Tyr61, and Glu104. Position 31 is an S-6-FMN cysteine (Cys31). Residue 170–173 (YGAH) coordinates substrate. Tyr175 functions as the Proton donor in the catalytic mechanism. Positions 223, 268, 300, 322, and 323 each coordinate FMN. [4Fe-4S] cluster contacts are provided by Cys346, Cys349, Cys352, and Cys365. ADP-binding residues include Ser401, Asp420, Thr421, His428, Met471, and Asp675.

In the N-terminal section; belongs to the NADH:flavin oxidoreductase/NADH oxidase family. In terms of assembly, homodimer. Forms a ternary complex with the heterodimeric electron transfer flavoprotein. Requires FMN as cofactor. [4Fe-4S] cluster is required as a cofactor.

The enzyme catalyses trimethylamine + oxidized [electron-transfer flavoprotein] + H2O + H(+) = dimethylamine + reduced [electron-transfer flavoprotein] + formaldehyde. The polypeptide is Trimethylamine dehydrogenase (Methylophilus methylotrophus (Bacterium W3A1)).